The sequence spans 102 residues: NADH-quinone oxidoreductase subunit K (102 aa).

The next 3 helical transmembrane spans lie at 5–25, 30–50, and 63–83; these read ALTG…FGVL, ILFQ…AFIA, and MFVL…ALFL.

It belongs to the complex I subunit 4L family. As to quaternary structure, NDH-1 is composed of 14 different subunits. Subunits NuoA, H, J, K, L, M, N constitute the membrane sector of the complex.

The protein localises to the cell inner membrane. The catalysed reaction is a quinone + NADH + 5 H(+)(in) = a quinol + NAD(+) + 4 H(+)(out). NDH-1 shuttles electrons from NADH, via FMN and iron-sulfur (Fe-S) centers, to quinones in the respiratory chain. The immediate electron acceptor for the enzyme in this species is believed to be ubiquinone. Couples the redox reaction to proton translocation (for every two electrons transferred, four hydrogen ions are translocated across the cytoplasmic membrane), and thus conserves the redox energy in a proton gradient. The sequence is that of NADH-quinone oxidoreductase subunit K from Rhodopseudomonas palustris (strain BisB18).